The chain runs to 199 residues: Putative acetyltransferase SACOL2570 (199 aa).

It belongs to the transferase hexapeptide repeat family.

This is Putative acetyltransferase SACOL2570 from Staphylococcus aureus (strain COL).